The chain runs to 849 residues: Alanine--tRNA ligase (849 aa).

Residues histidine 551, histidine 555, cysteine 653, and histidine 657 each coordinate Zn(2+).

Belongs to the class-II aminoacyl-tRNA synthetase family. The cofactor is Zn(2+).

It localises to the cytoplasm. It catalyses the reaction tRNA(Ala) + L-alanine + ATP = L-alanyl-tRNA(Ala) + AMP + diphosphate. Its function is as follows. Catalyzes the attachment of alanine to tRNA(Ala) in a two-step reaction: alanine is first activated by ATP to form Ala-AMP and then transferred to the acceptor end of tRNA(Ala). Also edits incorrectly charged Ser-tRNA(Ala) and Gly-tRNA(Ala) via its editing domain. This chain is Alanine--tRNA ligase, found in Sulfurimonas denitrificans (strain ATCC 33889 / DSM 1251) (Thiomicrospira denitrificans (strain ATCC 33889 / DSM 1251)).